The primary structure comprises 396 residues: Acetate kinase (396 aa).

Asn8 is a binding site for Mg(2+). Residue Lys15 participates in ATP binding. Arg89 lines the substrate pocket. Catalysis depends on Asp146, which acts as the Proton donor/acceptor. ATP is bound by residues 206 to 210 (HLGNG), 280 to 282 (DMR), and 328 to 332 (GVGEN). Glu382 contributes to the Mg(2+) binding site.

This sequence belongs to the acetokinase family. Homodimer. It depends on Mg(2+) as a cofactor. Mn(2+) is required as a cofactor.

Its subcellular location is the cytoplasm. It catalyses the reaction acetate + ATP = acetyl phosphate + ADP. It participates in metabolic intermediate biosynthesis; acetyl-CoA biosynthesis; acetyl-CoA from acetate: step 1/2. Its function is as follows. Catalyzes the formation of acetyl phosphate from acetate and ATP. Can also catalyze the reverse reaction. This Clavibacter michiganensis subsp. michiganensis (strain NCPPB 382) protein is Acetate kinase.